The sequence spans 424 residues: UDP-N-acetylglucosamine 1-carboxyvinyltransferase (424 aa).

Lys-22–Asn-23 is a binding site for phosphoenolpyruvate. Arg-93 contributes to the UDP-N-acetyl-alpha-D-glucosamine binding site. Cys-117 (proton donor) is an active-site residue. Position 117 is a 2-(S-cysteinyl)pyruvic acid O-phosphothioketal (Cys-117). Residues Lys-162–Val-165, Asp-307, and Ile-329 contribute to the UDP-N-acetyl-alpha-D-glucosamine site.

The protein belongs to the EPSP synthase family. MurA subfamily.

The protein localises to the cytoplasm. The catalysed reaction is phosphoenolpyruvate + UDP-N-acetyl-alpha-D-glucosamine = UDP-N-acetyl-3-O-(1-carboxyvinyl)-alpha-D-glucosamine + phosphate. The protein operates within cell wall biogenesis; peptidoglycan biosynthesis. In terms of biological role, cell wall formation. Adds enolpyruvyl to UDP-N-acetylglucosamine. The protein is UDP-N-acetylglucosamine 1-carboxyvinyltransferase of Actinobacillus pleuropneumoniae serotype 5b (strain L20).